The sequence spans 140 residues: Thioredoxin M-type, chloroplastic (140 aa).

A chloroplast-targeting transit peptide spans 1–34; that stretch reads MALVARRAAVPSARSSARPAFARAAPRRSVVVRA. A Thioredoxin domain is found at 35–140; sequence EAGAVNDDTF…IVQTVEKYLN (106 aa). Active-site nucleophile residues include Cys-64 and Cys-67. Cys-64 and Cys-67 form a disulfide bridge.

Belongs to the thioredoxin family. Plant M-type subfamily. As to quaternary structure, forms a complex with heterodimeric ferredoxin-thioredoxin reductase (FTR) and ferredoxin.

Its subcellular location is the plastid. The protein resides in the chloroplast. Functionally, participates in various redox reactions through the reversible oxidation of the active center dithiol to a disulfide. The M form is known to activate NADP-malate dehydrogenase. This Chlamydomonas reinhardtii (Chlamydomonas smithii) protein is Thioredoxin M-type, chloroplastic (TRXM).